The following is a 355-amino-acid chain: Protein-glutamate methylesterase/protein-glutamine glutaminase (355 aa).

In terms of domain architecture, Response regulatory spans 7-123 (AAVVVDDSQF…SVGIKQQQDE (117 aa)). D57 carries the post-translational modification 4-aspartylphosphate. Residues 139 to 159 (TEAAAERTTSTATSTTTSRSA) form a disordered region. The CheB-type methylesterase domain maps to 161 to 355 (EYVDKPTLVI…DGVLDTIMRE (195 aa)). Residues S173, H200, and D297 contribute to the active site.

The protein belongs to the CheB family. In terms of processing, phosphorylated by CheA. Phosphorylation of the N-terminal regulatory domain activates the methylesterase activity.

It is found in the cytoplasm. It catalyses the reaction [protein]-L-glutamate 5-O-methyl ester + H2O = L-glutamyl-[protein] + methanol + H(+). It carries out the reaction L-glutaminyl-[protein] + H2O = L-glutamyl-[protein] + NH4(+). In terms of biological role, involved in chemotaxis. Part of a chemotaxis signal transduction system that modulates chemotaxis in response to various stimuli. Catalyzes the demethylation of specific methylglutamate residues introduced into the chemoreceptors (methyl-accepting chemotaxis proteins or MCP) by CheR. Also mediates the irreversible deamidation of specific glutamine residues to glutamic acid. In Natronomonas pharaonis (strain ATCC 35678 / DSM 2160 / CIP 103997 / JCM 8858 / NBRC 14720 / NCIMB 2260 / Gabara) (Halobacterium pharaonis), this protein is Protein-glutamate methylesterase/protein-glutamine glutaminase.